The chain runs to 565 residues: Heme/hemopexin transporter protein HuxB (565 aa).

The first 26 residues, 1–26, serve as a signal peptide directing secretion; that stretch reads MKMRPRYSVIASAVSLGFVLSKSVMA. The POTRA domain maps to 73-150; sequence FPLTQVQILD…GTVKILLLKG (78 aa).

The protein belongs to the TPS (TC 1.B.20) family.

The protein localises to the cell outer membrane. Likely functions in the release of soluble HxuA from the cell. In terms of biological role, probable member of a two partner secretion pathway (TPS) in which it mediates the secretion of HuxA. This is Heme/hemopexin transporter protein HuxB (hxuB) from Haemophilus influenzae (strain 86-028NP).